Here is a 292-residue protein sequence, read N- to C-terminus: 11-beta-hydroxysteroid dehydrogenase 1 (292 aa).

Residues 7–24 traverse the membrane as a helical segment; the sequence is YLLPILGIFLAYYYYSAN.

This sequence belongs to the short-chain dehydrogenases/reductases (SDR) family. Homodimer. Expressed highest in liver and ovaries (corpora lutea, granulosa cells, thecal, uterine caruncle and intercarunculer tissues), lower expression in kidney and spleen, and lowest in the adrenal.

It localises to the endoplasmic reticulum membrane. It catalyses the reaction an 11beta-hydroxysteroid + NADP(+) = an 11-oxosteroid + NADPH + H(+). It carries out the reaction corticosterone + NADP(+) = 11-dehydrocorticosterone + NADPH + H(+). The enzyme catalyses cortisone + NADPH + H(+) = cortisol + NADP(+). The catalysed reaction is a 7beta-hydroxysteroid + NADP(+) = a 7-oxosteroid + NADPH + H(+). It catalyses the reaction 7-oxocholesterol + NADPH + H(+) = 7beta-hydroxycholesterol + NADP(+). It carries out the reaction chenodeoxycholate + NADP(+) = 7-oxolithocholate + NADPH + H(+). The enzyme catalyses 7-oxolithocholate + NADPH + H(+) = ursodeoxycholate + NADP(+). The catalysed reaction is glycochenodeoxycholate + NADP(+) = 7-oxoglycolithocholate + NADPH + H(+). It catalyses the reaction taurochenodeoxycholate + NADP(+) = 7-oxotaurolithocholate + NADPH + H(+). It carries out the reaction tauroursodeoxycholate + NADP(+) = 7-oxotaurolithocholate + NADPH + H(+). The enzyme catalyses glycoursodeoxycholate + NADP(+) = 7-oxoglycolithocholate + NADPH + H(+). The catalysed reaction is 7-oxopregnenolone + NADPH + H(+) = 7beta-hydroxypregnenolone + NADP(+). It catalyses the reaction 3beta,7alpha-dihydroxyandrost-5-en-17-one + NADP(+) = 3beta-hydroxy-5-androstene-7,17-dione + NADPH + H(+). It carries out the reaction 3beta-hydroxy-5-androstene-7,17-dione + NADPH + H(+) = 3beta,7beta-dihydroxyandrost-5-en-17-one + NADP(+). The enzyme catalyses 3beta-hydroxy-5alpha-androstane-7,17-dione + NADPH + H(+) = 3beta,7beta-dihydroxy-5alpha-androstan-17-one + NADP(+). Controls the reversible conversion of biologically active glucocorticoids such as cortisone to cortisol, and 11-dehydrocorticosterone to corticosterone in the presence of NADP(H). Participates in the corticosteroid receptor-mediated anti-inflammatory response, as well as metabolic and homeostatic processes. Plays a role in the secretion of aqueous humor in the eye, maintaining a normotensive, intraocular environment. Bidirectional in vitro, predominantly functions as a reductase in vivo, thereby increasing the concentration of active glucocorticoids. It has broad substrate specificity, besides glucocorticoids, it accepts other steroid and sterol substrates. Interconverts 7-oxo- and 7-hydroxy-neurosteroids such as 7-oxopregnenolone and 7beta-hydroxypregnenolone, 7-oxodehydroepiandrosterone (3beta-hydroxy-5-androstene-7,17-dione) and 7beta-hydroxydehydroepiandrosterone (3beta,7beta-dihydroxyandrost-5-en-17-one), among others. Catalyzes the stereo-specific conversion of the major dietary oxysterol, 7-ketocholesterol (7-oxocholesterol), into the more polar 7-beta-hydroxycholesterol metabolite. 7-oxocholesterol is one of the most important oxysterols, it participates in several events such as induction of apoptosis, accumulation in atherosclerotic lesions, lipid peroxidation, and induction of foam cell formation. Mediates the 7-oxo reduction of 7-oxolithocholate mainly to chenodeoxycholate, and to a lesser extent to ursodeoxycholate, both in its free form and when conjugated to glycine or taurine, providing a link between glucocorticoid activation and bile acid metabolism. Catalyzes the synthesis of 7-beta-25-dihydroxycholesterol from 7-oxo-25-hydroxycholesterol in vitro, which acts as a ligand for the G-protein-coupled receptor (GPCR) Epstein-Barr virus-induced gene 2 (EBI2) and may thereby regulate immune cell migration. This chain is 11-beta-hydroxysteroid dehydrogenase 1, found in Bos taurus (Bovine).